The sequence spans 429 residues: Isocitrate dehydrogenase [NADP] (429 aa).

Threonine 108 lines the NADP(+) pocket. The D-threo-isocitrate site is built by serine 117, asparagine 119, arginine 123, arginine 133, and arginine 156. Aspartate 308 contributes to the Mg(2+) binding site. NADP(+)-binding positions include histidine 340–tyrosine 346, asparagine 353, tyrosine 393, and arginine 397.

This sequence belongs to the isocitrate and isopropylmalate dehydrogenases family. Homodimer. Mg(2+) serves as cofactor. It depends on Mn(2+) as a cofactor.

The enzyme catalyses D-threo-isocitrate + NADP(+) = 2-oxoglutarate + CO2 + NADPH. Catalyzes the oxidative decarboxylation of isocitrate to 2-oxoglutarate and carbon dioxide with the concomitant reduction of NADP(+). The chain is Isocitrate dehydrogenase [NADP] (icd) from Caldococcus noboribetus.